A 266-amino-acid polypeptide reads, in one-letter code: Type II iodothyronine deiodinase (266 aa).

Residues 1-9 (MGLLSVDLL) lie on the Lumenal side of the membrane. The helical; Signal-anchor for type III membrane protein transmembrane segment at 10-34 (ITLQILPVFFSNCLFLALYDSVILL) threads the bilayer. Residues 35–266 (KHVALLLSRS…KNFSKRUILD (232 aa)) are Cytoplasmic-facing. The active site involves Sec130. Residues Sec130 and Sec263 are each a non-standard amino acid (selenocysteine).

Belongs to the iodothyronine deiodinase family. Predominantly monomer. Can form homodimers but homodimerization is not essential for enzyme activity. Interacts with USP20 and USP33. Interacts with MARCHF6. Ubiquitinated by MARCHF6, leading to its degradation by the proteasome. Deubiquitinated by USP20 and USP33. In terms of tissue distribution, expressed in mammary gland and in brain.

It is found in the endoplasmic reticulum membrane. It carries out the reaction 3,3',5-triiodo-L-thyronine + iodide + A + H(+) = L-thyroxine + AH2. It catalyses the reaction 3,3'-diiodo-L-thyronine + iodide + A + H(+) = 3,3',5'-triiodo-L-thyronine + AH2. The enzyme catalyses 3'-iodo-L-thyronine + iodide + A + H(+) = 3',5'-diiodo-L-thyronine + AH2. The catalysed reaction is 3,3'-diiodothyronamine + iodide + A + H(+) = 3,3',5'-triiodothyronamine + AH2. It carries out the reaction 3'-iodothyronamine + iodide + A + H(+) = 3',5'-diiodothyronamine + AH2. Functionally, plays a crucial role in the metabolism of thyroid hormones (TH) and has specific roles in TH activation and inactivation by deiodination. Catalyzes the deiodination of L-thyroxine (T4) to 3,5,3'-triiodothyronine (T3) and 3,3',5'-triiodothyronine (rT3) to 3,3'-diiodothyronine (3,3'-T2) via outer-ring deiodination (ORD). Catalyzes the deiodination of 3',5'-diiodothyronine (3',5'-T2) to 3'-monoiodothyronine (3'-T1) via ORD. Catalyzes the phenolic ring deiodinations of 3,3',5'-triiodothyronamine and 3',5'- diiodothyronamine. This Mus musculus (Mouse) protein is Type II iodothyronine deiodinase (Dio2).